The chain runs to 478 residues: Melanopsin (478 aa).

Pro residues predominate over residues 1 to 14 (MNPPSGPRVPPSPT). Residues 1-32 (MNPPSGPRVPPSPTQEPSCMATPAPPSWWDSS) are disordered. The Extracellular portion of the chain corresponds to 1 to 72 (MNPPSGPRVP…VDVPDHAHYT (72 aa)). The helical transmembrane segment at 73–93 (LGTVILLVGLTGMLGNLTVIY) threads the bilayer. The Cytoplasmic segment spans residues 94–107 (TFCRSRSLRTPANM). A helical membrane pass occupies residues 108 to 128 (FIINLAVSDFLMSFTQAPVFF). Topologically, residues 129–144 (TSSLYKQWLFGETGCE) are extracellular. C143 and C221 are disulfide-bonded. Residues 145–165 (FYAFCGALFGISSMITLTAIA) traverse the membrane as a helical segment. The Cytoplasmic portion of the chain corresponds to 166–188 (LDRYLVITRPLATFGVASKRRAA). A helical transmembrane segment spans residues 189 to 209 (FVLLGVWLYALAWSLPPFFGW). The Extracellular portion of the chain corresponds to 210–238 (SAYVPEGLLTSCSWDYMSFTPAVRAYTML). Residues 239–259 (LCCFVFFLPLLIIIYCYIFIF) traverse the membrane as a helical segment. Residues 260 to 296 (RAIRETGRALQTFGACKGNGESLWQRQRLQSECKMAK) lie on the Cytoplasmic side of the membrane. Residues 297-317 (IMLLVILLFVLSWAPYSAVAL) form a helical membrane-spanning segment. Over 318-332 (VAFAGYAHVLTPYMS) the chain is Extracellular. A helical membrane pass occupies residues 333–353 (SVPAVIAKASAIHNPIIYAIT). At K340 the chain carries N6-(retinylidene)lysine. Topologically, residues 354–478 (HPKYRVAIAQ…GLIPSQDPRM (125 aa)) are cytoplasmic. The tract at residues 440 to 478 (LYGQGLEDLEAKAPPRPQGHEAETPGKTKGLIPSQDPRM) is disordered. Positions 448–465 (LEAKAPPRPQGHEAETPG) are enriched in basic and acidic residues.

Belongs to the G-protein coupled receptor 1 family. Opsin subfamily. Expressed in the retina.

Its subcellular location is the cell membrane. It localises to the cell projection. It is found in the axon. The protein resides in the dendrite. The protein localises to the perikaryon. In terms of biological role, photoreceptor that binds cis-retinaldehydes. Contributes to pupillar reflex, photoentrainment and other non-image forming responses to light. May be involved in the optokinetic visual tracking response. May be involved in the regulation of retinal hyaloid vessel growth and regression. This chain is Melanopsin (OPN4), found in Homo sapiens (Human).